The chain runs to 347 residues: Phenylalanine--tRNA ligase alpha subunit (347 aa).

E265 lines the Mg(2+) pocket.

This sequence belongs to the class-II aminoacyl-tRNA synthetase family. Phe-tRNA synthetase alpha subunit type 1 subfamily. As to quaternary structure, tetramer of two alpha and two beta subunits. Mg(2+) is required as a cofactor.

It localises to the cytoplasm. The enzyme catalyses tRNA(Phe) + L-phenylalanine + ATP = L-phenylalanyl-tRNA(Phe) + AMP + diphosphate + H(+). The chain is Phenylalanine--tRNA ligase alpha subunit from Mycolicibacterium gilvum (strain PYR-GCK) (Mycobacterium gilvum (strain PYR-GCK)).